The sequence spans 273 residues: 2,3,4,5-tetrahydropyridine-2,6-dicarboxylate N-succinyltransferase (273 aa).

Arg104 and Asp141 together coordinate substrate.

This sequence belongs to the transferase hexapeptide repeat family. Homotrimer.

Its subcellular location is the cytoplasm. It catalyses the reaction (S)-2,3,4,5-tetrahydrodipicolinate + succinyl-CoA + H2O = (S)-2-succinylamino-6-oxoheptanedioate + CoA. It participates in amino-acid biosynthesis; L-lysine biosynthesis via DAP pathway; LL-2,6-diaminopimelate from (S)-tetrahydrodipicolinate (succinylase route): step 1/3. This is 2,3,4,5-tetrahydropyridine-2,6-dicarboxylate N-succinyltransferase from Neisseria meningitidis serogroup B (strain ATCC BAA-335 / MC58).